Consider the following 465-residue polypeptide: UDP-N-acetylmuramate--L-alanine ligase (465 aa).

Position 112-118 (112-118) interacts with ATP; that stretch reads GTHGKTT.

It belongs to the MurCDEF family.

Its subcellular location is the cytoplasm. The enzyme catalyses UDP-N-acetyl-alpha-D-muramate + L-alanine + ATP = UDP-N-acetyl-alpha-D-muramoyl-L-alanine + ADP + phosphate + H(+). The protein operates within cell wall biogenesis; peptidoglycan biosynthesis. Its function is as follows. Cell wall formation. The sequence is that of UDP-N-acetylmuramate--L-alanine ligase from Burkholderia lata (strain ATCC 17760 / DSM 23089 / LMG 22485 / NCIMB 9086 / R18194 / 383).